Here is a 662-residue protein sequence, read N- to C-terminus: DCC-interacting protein 13-beta (662 aa).

The required for RAB5A binding stretch occupies residues 1–428 (MPAVDKLLLE…NSDIEDDNIV (428 aa)). The 266-residue stretch at 3–268 (AVDKLLLEEA…ESVYTPDIDV (266 aa)) folds into the BAR domain. The 99-residue stretch at 277 to 375 (LIQKTGYLNL…WICAVNNISR (99 aa)) folds into the PH domain. In terms of domain architecture, PID spans 486-635 (SLLQQMFIVR…LMLSVPLTND (150 aa)). A disordered region spans residues 642–662 (NDQADDTGGSPSENRGAESEA).

As to quaternary structure, homodimer. Homotetramer. Binds RAB5A/Rab5 through an N-terminal domain. This interaction is essential for its recruitment to endosomal membranes as well as its role in cell proliferation. Binds subunits of the NuRD/MeCP1 complex. Interacts with FSHR; interaction is independent of follicle stimulating hormone stimulation. Interacts with APPL1; the interaction is decreased by adiponectin in a time-dependent manner. Forms a complex comprising APPL1, RUVBL2, CTNNB1, HDAC1 and HDAC2; interaction reduces interaction between CTNNB1, HDAC1, HDAC2 and RUVBL2 leading to the decrease of deacetylase activity of this complex; affects the recruitment of repressive complexes to the Wnt target genes. Interacts (via BAR domain) with TBC1D1; interaction is dependent of TBC1D1 phosphorylation at 'Ser-235'; interaction diminishes the phosphorylation of TBC1D1 at 'Thr-596', resulting in inhibition of SLC2A4 translocation and glucose uptake. Interacts with ANXA2; targets APPL2 to endosomes and acting in parallel to RAB5A. Interacts with RAB31 (in GTP-bound form); interaction contributes to or enhances recruitment of APPL2 to the phagosomes; interaction enhances Fc-gamma receptor-mediated phagocytosis through PI3K/Akt signaling in macrophages. Interacts with PIK3R1; forms a complex with PIK3R1 and APPL1. Interacts (via BAR domain) with ADIPOR1; hinders the accessibility of APPL1 to ADIPOR1; negatively regulates adiponectin signaling; ADIPOQ dissociates this interaction and facilitates the recruitment of APPL1 to ADIPOR1. Interacts (via BAR domain) with ADIPOR2; ADIPOQ dissociates this interaction. Expressed in insulin-target tissues including skeletal muscle, liver, fat, and brain. Highly expressed in kidney and pancreas. Abundantly expressed in the ventromedial hypothalamus (VMH), barely detectable in the arcuate nucleus (ARC) and paraventricular nucleus (PVN) of the hypothalamus. Also expressed in pancreatic beta-cells.

Its subcellular location is the early endosome membrane. The protein resides in the nucleus. The protein localises to the cell membrane. It localises to the endosome membrane. It is found in the cytoplasm. Its subcellular location is the cytoplasmic vesicle. The protein resides in the phagosome. The protein localises to the cell projection. It localises to the ruffle. It is found in the ruffle membrane. Its subcellular location is the phagosome membrane. Functionally, multifunctional adapter protein that binds to various membrane receptors, nuclear factors and signaling proteins to regulate many processes, such as cell proliferation, immune response, endosomal trafficking and cell metabolism. Regulates signaling pathway leading to cell proliferation through interaction with RAB5A and subunits of the NuRD/MeCP1 complex. Plays a role in immune response by modulating phagocytosis, inflammatory and innate immune responses. In macrophages, enhances Fc-gamma receptor-mediated phagocytosis through interaction with RAB31 leading to activation of PI3K/Akt signaling. In response to LPS, modulates inflammatory responses by playing a key role on the regulation of TLR4 signaling and in the nuclear translocation of RELA/NF-kappa-B p65 and the secretion of pro- and anti-inflammatory cytokines. Also functions as a negative regulator of innate immune response via inhibition of AKT1 signaling pathway by forming a complex with APPL1 and PIK3R1. Plays a role in endosomal trafficking of TGFBR1 from the endosomes to the nucleus. Plays a role in cell metabolism by regulating adiponectin and insulin signaling pathways and adaptative thermogenesis. In muscle, negatively regulates adiponectin-simulated glucose uptake and fatty acid oxidation by inhibiting adiponectin signaling pathway through APPL1 sequestration thereby antagonizing APPL1 action. In muscles, negatively regulates insulin-induced plasma membrane recruitment of GLUT4 and glucose uptake through interaction with TBC1D1. Plays a role in cold and diet-induced adaptive thermogenesis by activating ventromedial hypothalamus (VMH) neurons throught AMPK inhibition which enhances sympathetic outflow to subcutaneous white adipose tissue (sWAT), sWAT beiging and cold tolerance. Also plays a role in other signaling pathways namely Wnt/beta-catenin, HGF and glucocorticoid receptor signaling. Positive regulator of beta-catenin/TCF-dependent transcription through direct interaction with RUVBL2/reptin resulting in the relief of RUVBL2-mediated repression of beta-catenin/TCF target genes by modulating the interactions within the beta-catenin-reptin-HDAC complex. May affect adult neurogenesis in hippocampus and olfactory system via regulating the sensitivity of glucocorticoid receptor. Required for fibroblast migration through HGF cell signaling. The protein is DCC-interacting protein 13-beta of Mus musculus (Mouse).